The chain runs to 925 residues: Ectonucleotide pyrophosphatase/phosphodiesterase family member 1 (925 aa).

The span at 1 to 17 (MERDGCAGGGSRGGEGG) shows a compositional bias: gly residues. Residues 1–43 (MERDGCAGGGSRGGEGGRAPREGPAGNGRDRGRSHAAEAPGDP) form a disordered region. The Cytoplasmic portion of the chain corresponds to 1–76 (MERDGCAGGG…RTAKDPNTYK (76 aa)). The short motif at 45–52 (AAASLLAP) is the Di-leucine motif element. A helical; Signal-anchor for type II membrane protein transmembrane segment spans residues 77–97 (VLSLVLSVCVLTTILGCIFGL). At 98-925 (KPSCAKEVKS…THLPTFSQED (828 aa)) the chain is on the extracellular side. 2 SMB domains span residues 104–144 (EVKS…IEPE) and 145–189 (HIWT…GEKS). 10 cysteine pairs are disulfide-bonded: Cys-108–Cys-122, Cys-112–Cys-140, Cys-120–Cys-133, Cys-126–Cys-132, Cys-149–Cys-166, Cys-154–Cys-184, Cys-164–Cys-177, Cys-170–Cys-176, Cys-195–Cys-241, and Cys-203–Cys-415. N-linked (GlcNAc...) asparagine glycosylation occurs at Asn-179. The tract at residues 191–591 (VEEPCESINE…APNNGTHGSL (401 aa)) is phosphodiesterase. 3 residues coordinate AMP: Asp-218, Thr-256, and Asn-277. The Zn(2+) site is built by Asp-218 and Thr-256. Catalysis depends on Thr-256, which acts as the AMP-threonine intermediate. Residues Thr-256 and Asn-277 each contribute to the CMP site. The dTMP site is built by Thr-256 and Asn-277. Residues Thr-256 and Asn-277 each coordinate GMP. At Thr-256 the chain carries Phosphothreonine. Residue Asn-285 is glycosylated (N-linked (GlcNAc...) asparagine). GMP-binding residues include Leu-290, Lys-295, and Tyr-340. 2 residues coordinate AMP: Lys-295 and Tyr-340. The CMP site is built by Lys-295 and Tyr-340. Tyr-340 contacts dTMP. Residue Asn-341 is glycosylated (N-linked (GlcNAc...) asparagine). Asp-376 is an AMP binding site. The Zn(2+) site is built by Asp-376, His-380, Asp-423, and His-424. Asp-376 is a CMP binding site. DTMP is bound at residue Asp-376. A GMP-binding site is contributed by Asp-376. Position 380 (His-380) interacts with 2',3'-cGAMP. Position 424 (His-424) interacts with AMP. His-424 lines the CMP pocket. His-424 is a binding site for dTMP. A GMP-binding site is contributed by His-424. 6 disulfides stabilise this stretch: Cys-431-Cys-530, Cys-480-Cys-868, Cys-614-Cys-672, Cys-626-Cys-726, Cys-628-Cys-711, and Cys-838-Cys-848. Asn-477 carries N-linked (GlcNAc...) asparagine glycosylation. Ser-532 contacts 2',3'-cGAMP. His-535 is an AMP binding site. Residue His-535 participates in Zn(2+) binding. His-535 contacts CMP. DTMP is bound at residue His-535. His-535 lines the GMP pocket. N-linked (GlcNAc...) asparagine glycosylation is found at Asn-585, Asn-643, Asn-700, Asn-731, and Asn-748. The interval 597-647 (NPVYTPKHPKEVHPLVQCPFTRNPRDNLGCSCNPSILPIEDFQTQFNLTVA) is linker. Positions 654–925 (HETLPYGRPR…THLPTFSQED (272 aa)) are nuclease-like domain. Residues Asp-800, Asp-802, Asp-804, Arg-806, and Asp-808 each coordinate Ca(2+).

Belongs to the nucleotide pyrophosphatase/phosphodiesterase family. In terms of assembly, homodimer. Interacts with INSR; leading to inhibit INSR autophosphorylation and subsequent activation of INSR kinase activity. As to quaternary structure, monomeric. Zn(2+) serves as cofactor. In terms of processing, autophosphorylated as part of the catalytic cycle of phosphodiesterase/pyrophosphatase activity. Post-translationally, N-glycosylated. The secreted form is produced through cleavage at Lys-103 by intracellular processing. Expressed in plasma cells and also in a number of non-lymphoid tissues, including the distal convoluted tubule of the kidney, chondrocytes and epididymis. Expressed in melanocytes but not in keratinocytes.

It is found in the cell membrane. It localises to the basolateral cell membrane. Its subcellular location is the secreted. It catalyses the reaction Hydrolytically removes 5'-nucleotides successively from the 3'-hydroxy termini of 3'-hydroxy-terminated oligonucleotides.. It carries out the reaction a ribonucleoside 5'-triphosphate + H2O = a ribonucleoside 5'-phosphate + diphosphate + H(+). The catalysed reaction is ATP + H2O = AMP + diphosphate + H(+). The enzyme catalyses UTP + H2O = UMP + diphosphate + H(+). It catalyses the reaction GTP + H2O = GMP + diphosphate + H(+). It carries out the reaction CTP + H2O = CMP + diphosphate + H(+). The catalysed reaction is 2',3'-cGAMP + 2 H2O = GMP + AMP + 2 H(+). The enzyme catalyses P(1),P(4)-bis(5'-adenosyl) tetraphosphate + H2O = AMP + ATP + 2 H(+). It catalyses the reaction 3',5'-cyclic AMP + H2O = AMP + H(+). At low concentrations of ATP, a phosphorylated intermediate is formed which inhibits further hydrolysis. Functionally, nucleotide pyrophosphatase that generates diphosphate (PPi) and functions in bone mineralization and soft tissue calcification by regulating pyrophosphate levels. PPi inhibits bone mineralization and soft tissue calcification by binding to nascent hydroxyapatite crystals, thereby preventing further growth of these crystals. Preferentially hydrolyzes ATP, but can also hydrolyze other nucleoside 5' triphosphates such as GTP, CTP and UTP to their corresponding monophosphates with release of pyrophosphate, as well as diadenosine polyphosphates, and also 3',5'-cAMP to AMP. May also be involved in the regulation of the availability of nucleotide sugars in the endoplasmic reticulum and Golgi, and the regulation of purinergic signaling. Inhibits ectopic joint calcification and maintains articular chondrocytes by repressing hedgehog signaling; it is however unclear whether hedgehog inhibition is direct or indirect. Appears to modulate insulin sensitivity and function. Also involved in melanogenesis. Also able to hydrolyze 2',3'-cGAMP (cyclic GMP-AMP), a second messenger that activates TMEM173/STING and triggers type-I interferon production. 2',3'-cGAMP degradation takes place in the lumen or extracellular space, and not in the cytosol where it is produced; the role of 2',3'-cGAMP hydrolysis is therefore unclear. Not able to hydrolyze the 2',3'-cGAMP linkage isomer 3'-3'-cGAMP. The chain is Ectonucleotide pyrophosphatase/phosphodiesterase family member 1 from Homo sapiens (Human).